The primary structure comprises 655 residues: D-xylonate dehydratase YagF (655 aa).

The protein belongs to the IlvD/Edd family.

It catalyses the reaction D-xylonate = 2-dehydro-3-deoxy-D-arabinonate + H2O. Catalyzes the dehydration of D-xylonic acid to form 2-dehydro-3-deoxy-D-pentonate. The polypeptide is D-xylonate dehydratase YagF (yagF) (Escherichia coli (strain K12)).